The sequence spans 320 residues: Cytochrome f (320 aa).

The N-terminal stretch at 1 to 35 (MQTRNTFSWIKEQITRSISASLMIYIITRTSISNA) is a signal peptide. Residues Tyr-36, Cys-56, Cys-59, and His-60 each coordinate heme. A helical transmembrane segment spans residues 286–306 (VQGLLFFFAAVILAQIFLVLK).

The protein belongs to the cytochrome f family. The 4 large subunits of the cytochrome b6-f complex are cytochrome b6, subunit IV (17 kDa polypeptide, petD), cytochrome f and the Rieske protein, while the 4 small subunits are PetG, PetL, PetM and PetN. The complex functions as a dimer. Heme is required as a cofactor.

Its subcellular location is the plastid. It is found in the chloroplast thylakoid membrane. Its function is as follows. Component of the cytochrome b6-f complex, which mediates electron transfer between photosystem II (PSII) and photosystem I (PSI), cyclic electron flow around PSI, and state transitions. The protein is Cytochrome f of Helianthus annuus (Common sunflower).